The sequence spans 267 residues: Kit ligand (267 aa).

The first 25 residues, 1–25 (MKKTQTWIITCIYLQLLLFNPLVHT), serve as a signal peptide directing secretion. Gln26 carries the pyrrolidone carboxylic acid modification. Residues 26–215 (QGICRNRVTD…SNSIEDSSLQ (190 aa)) lie on the Extracellular side of the membrane. 2 disulfide bridges follow: Cys29-Cys114 and Cys68-Cys164. Residues Asn90, Asn97, Asn145, and Asn196 are each glycosylated (N-linked (GlcNAc...) asparagine). A helical transmembrane segment spans residues 216-238 (WAAVALPAFFSLVIGFAFGALYW). Over 239–267 (KKKQPNLTRTVENRQINEEDNEISMLQEK) the chain is Cytoplasmic.

The protein belongs to the SCF family. Homodimer, non-covalently linked. Heterotetramer with KIT, binding two KIT molecules; thereby mediates KIT dimerization and subsequent activation by autophosphorylation. In terms of processing, a soluble form is produced by proteolytic processing of the extracellular domain.

Its subcellular location is the cytoplasm. It is found in the cytoskeleton. The protein localises to the cell membrane. The protein resides in the cell projection. It localises to the lamellipodium. Its subcellular location is the filopodium. It is found in the secreted. Its function is as follows. Ligand for the receptor-type protein-tyrosine kinase KIT. Plays an essential role in the regulation of cell survival and proliferation, hematopoiesis, stem cell maintenance, gametogenesis, mast cell development, migration and function, and in melanogenesis. KITLG/SCF binding can activate several signaling pathways. Promotes phosphorylation of PIK3R1, the regulatory subunit of phosphatidylinositol 3-kinase, and subsequent activation of the kinase AKT1. KITLG/SCF and KIT also transmit signals via GRB2 and activation of RAS, RAF1 and the MAP kinases MAPK1/ERK2 and/or MAPK3/ERK1. KITLG/SCF and KIT promote activation of STAT family members STAT1, STAT3 and STAT5. KITLG/SCF and KIT promote activation of PLCG1, leading to the production of the cellular signaling molecules diacylglycerol and inositol 1,4,5-trisphosphate. KITLG/SCF acts synergistically with other cytokines, probably interleukins. In Ovis aries (Sheep), this protein is Kit ligand (KITLG).